We begin with the raw amino-acid sequence, 328 residues long: Alcohol-sensitive RING finger protein 1 (328 aa).

Residues 18 to 61 (CSICWESMPSGVGRLMPCGHEYHLACIRKWFHLHSGNRSCPVCR) form an RING-type 1; atypical zinc finger. The RING-type 2; atypical zinc finger occupies 129-177 (CGICGEMNGDIDTCCNRCHHMYHHSCLGQLLVEVNAEREQGWSHCIFCY).

It is found in the cytoplasm. It localises to the nucleus. Its function is as follows. Required for tolerance to alcohol. This is Alcohol-sensitive RING finger protein 1 (ASR1) from Eremothecium gossypii (strain ATCC 10895 / CBS 109.51 / FGSC 9923 / NRRL Y-1056) (Yeast).